A 319-amino-acid chain; its full sequence is Protein sprouty homolog 1 (319 aa).

Methionine 1 is subject to N-acetylmethionine. Disordered stretches follow at residues 54 to 78 (TEGP…ERTH) and 100 to 160 (AVLP…QPKQ). Residues 69–78 (PRQEKHERTH) are compositionally biased toward basic and acidic residues. Residues 112-131 (SRSTSTGSAASSGSNSSASS) are compositionally biased toward low complexity. An SPR domain is found at 183–295 (QCGKCKCGEC…CYDWIHRPGC (113 aa)).

Belongs to the sprouty family. As to quaternary structure, forms heterodimers with SPRY2. Interacts with TESK1. Interacts with CAV1 (via C-terminus).

The protein localises to the cytoplasm. Its subcellular location is the membrane. Inhibits fibroblast growth factor (FGF)-induced retinal lens fiber differentiation, probably by inhibiting FGF-mediated phosphorylation of ERK1/2. Inhibits TGFB-induced epithelial-to-mesenchymal transition in lens epithelial cells. The sequence is that of Protein sprouty homolog 1 (SPRY1) from Homo sapiens (Human).